A 153-amino-acid chain; its full sequence is SsrA-binding protein (153 aa).

It belongs to the SmpB family.

It localises to the cytoplasm. Functionally, required for rescue of stalled ribosomes mediated by trans-translation. Binds to transfer-messenger RNA (tmRNA), required for stable association of tmRNA with ribosomes. tmRNA and SmpB together mimic tRNA shape, replacing the anticodon stem-loop with SmpB. tmRNA is encoded by the ssrA gene; the 2 termini fold to resemble tRNA(Ala) and it encodes a 'tag peptide', a short internal open reading frame. During trans-translation Ala-aminoacylated tmRNA acts like a tRNA, entering the A-site of stalled ribosomes, displacing the stalled mRNA. The ribosome then switches to translate the ORF on the tmRNA; the nascent peptide is terminated with the 'tag peptide' encoded by the tmRNA and targeted for degradation. The ribosome is freed to recommence translation, which seems to be the essential function of trans-translation. The protein is SsrA-binding protein of Cytophaga hutchinsonii (strain ATCC 33406 / DSM 1761 / CIP 103989 / NBRC 15051 / NCIMB 9469 / D465).